We begin with the raw amino-acid sequence, 720 residues long: Engulfment and cell motility protein 3 (720 aa).

An ELMO domain is found at 307-479; the sequence is EQREQLQALR…VVREQLARTL (173 aa). In terms of domain architecture, PH spans 541–663; that stretch reads LRLCEGMLFR…WTDGLSALLG (123 aa).

In terms of assembly, probably interacts directly with the SH3-domain of DOCK1 via its SH3-binding site. Part of a complex with DOCK1 and RAC1. Interacts with ADGRB3.

Its subcellular location is the cytoplasm. In terms of biological role, involved in cytoskeletal rearrangements required for phagocytosis of apoptotic cells and cell motility. Acts in association with DOCK1 and CRK. Was initially proposed to be required in complex with DOCK1 to activate Rac Rho small GTPases. May enhance the guanine nucleotide exchange factor (GEF) activity of DOCK1. This is Engulfment and cell motility protein 3 (Elmo3) from Rattus norvegicus (Rat).